A 270-amino-acid polypeptide reads, in one-letter code: Proteasome subunit alpha (270 aa).

The tract at residues 229–270 is disordered; it reads LLDTEAAGSTPTDAPSDTEDGDSTDGTDRADGTTDSTEETEK. Acidic residues predominate over residues 244–253; that stretch reads SDTEDGDSTD.

The protein belongs to the peptidase T1A family. The 20S proteasome core is composed of 14 alpha and 14 beta subunits that assemble into four stacked heptameric rings, resulting in a barrel-shaped structure. The two inner rings, each composed of seven catalytic beta subunits, are sandwiched by two outer rings, each composed of seven alpha subunits. The catalytic chamber with the active sites is on the inside of the barrel. Has a gated structure, the ends of the cylinder being occluded by the N-termini of the alpha-subunits. Is capped by the proteasome-associated ATPase, ARC.

The protein resides in the cytoplasm. Its pathway is protein degradation; proteasomal Pup-dependent pathway. The formation of the proteasomal ATPase ARC-20S proteasome complex, likely via the docking of the C-termini of ARC into the intersubunit pockets in the alpha-rings, may trigger opening of the gate for substrate entry. Interconversion between the open-gate and close-gate conformations leads to a dynamic regulation of the 20S proteasome proteolysis activity. Component of the proteasome core, a large protease complex with broad specificity involved in protein degradation. The polypeptide is Proteasome subunit alpha (Streptomyces griseus subsp. griseus (strain JCM 4626 / CBS 651.72 / NBRC 13350 / KCC S-0626 / ISP 5235)).